The chain runs to 524 residues: Pentatricopeptide repeat-containing protein At1g02150 (524 aa).

PPR repeat units lie at residues 168-202, 203-237, 238-268, 274-304, 309-339, 344-378, and 379-413; these read DRRVYGSLLNAYVRAKSREKAEALLNTMRDKGYAL, HPLPFNVMMTLYMNLREYDKVDAMVFEMKQKDIRL, DIYSYNIWLSSCGSLGSVEKMELVYQQMKSD, NWTTFSTMATMYIKMGETEKAEDALRKVEAR, NRIPYHYLLSLYGSLGNKKELYRVWHVYKSV, PNLGYHALVSSLVRMGDIEGAEKVYEEWLPVKSSY, and DPRIPNLLMNAYVKNDQLETAEGLFDHMVEMGGKP.

This sequence belongs to the PPR family. P subfamily.

In Arabidopsis thaliana (Mouse-ear cress), this protein is Pentatricopeptide repeat-containing protein At1g02150.